Consider the following 38-residue polypeptide: Photosystem II reaction center protein X (38 aa).

A helical transmembrane segment spans residues 9 to 29 (IASLTAGALVLSAIGIALIII).

It belongs to the PsbX family. Type 1 subfamily. PSII is composed of 1 copy each of membrane proteins PsbA, PsbB, PsbC, PsbD, PsbE, PsbF, PsbH, PsbI, PsbJ, PsbK, PsbL, PsbM, PsbT, PsbX, PsbY, PsbZ, Psb30/Ycf12, at least 3 peripheral proteins of the oxygen-evolving complex and a large number of cofactors. It forms dimeric complexes.

The protein localises to the plastid. It localises to the chloroplast thylakoid membrane. Involved in the binding and/or turnover of quinones at the Q(B) site of photosystem II (PSII). PSII is a light-driven water plastoquinone oxidoreductase, using light energy to abstract electrons from H(2)O, generating a proton gradient subsequently used for ATP formation. This is Photosystem II reaction center protein X from Thalassiosira pseudonana (Marine diatom).